The chain runs to 70 residues: Putative microRNA 17 host gene protein (70 aa).

The Cytoplasmic portion of the chain corresponds to 1 to 20 (MFCHVDVKISSKRYTWTKLP). The helical transmembrane segment at 21 to 43 (LNVPKLVLIYLQSHFVLFFFSMC) threads the bilayer. The Extracellular segment spans residues 44-70 (QSIWERPAIGRATTSSASWMVGYDCLL).

In terms of tissue distribution, highly expressed in B-cell lymphoma and lung cancer.

The protein resides in the membrane. In Homo sapiens (Human), this protein is Putative microRNA 17 host gene protein (MIR17HG).